Consider the following 759-residue polypeptide: MMAALYPSTDLSGVSSSSLPSSPSSSSPNEVMALKDVREVKEENTLNEKLFLLACDKGDYYMVKKILEENSSGDLNINCVDVLGRNAVTITIENESLDILQLLLDYGCQKLMERIQNPEYSTTMDVAPVILAAHRNNYEILTMLLKQDVALPKPHAVGCECTLCSAKNKKDSLRHSRFRLDIYRCLASPALIMLTEEDPILRAFELSADLKELSLVEVEFWNDYEELARQCKMFAKDLLAQARNSRELEVILNHTSSDEPLDKRGLLEERMNLSRLKLAIKYNQKEFVSQSNCQQFLNTVWFGQMSGYRRKPTCKKIMTVLTVGIFWPVLSLCYLIAPKSQFGRIIHTPFMKFIIHGASYFTFLLLLNLYSLVYNEDKKNTMGPALERIDYLLILWIIGMIWSDIKRLWYEGLEDFLEESRNQLSFVMNSLYLATFALKVVAHNKFHDFADRKDWDAFHPTLVAEGLFAFANVLSYLRLFFMYTTSSILGPLQISMGQMLQDFGKFLGMFLLVLFSFTIGLTQLYDKGYTSKEQKDCVGIFCEQQSNDTFHSFIGTCFALFWYIFSLAHVAIFVTRFSYGEELQSFVGAVIVGTYNVVVVIVLTKLLVAMLHKSFQLIANHEDKEWKFARAKLWLSYFDDKCTLPPPFNIIPSPKTICYMISSLSKWVCSHTSKGKVRRQNSLKEWRNLKQKRDENYQKVMCCLVHRYLTSMRQKMQSTDQATVENLNELRQDLSKFRNEIRDLLGFRTSKYAMFYPKN.

Residues 1-30 (MMAALYPSTDLSGVSSSSLPSSPSSSSPNE) form a disordered region. Residues 1–311 (MMAALYPSTD…FGQMSGYRRK (311 aa)) lie on the Cytoplasmic side of the membrane. Over residues 15–28 (SSSSLPSSPSSSSP) the composition is skewed to low complexity. ANK repeat units lie at residues 46–75 (LNEK…SGDL), 83–109 (LGRN…YGCQ), and 124–146 (MDVA…MLLK). Zn(2+)-binding residues include His155, Cys159, Cys161, and Cys164. The segment at residues 312–345 (PTCKKIMTVLTVGIFWPVLSLCYLIAPKSQFGRI) is an intramembrane region (discontinuously helical). Topologically, residues 346 to 352 (IHTPFMK) are cytoplasmic. Residues 353–370 (FIIHGASYFTFLLLLNLY) form a helical membrane-spanning segment. Over 371-388 (SLVYNEDKKNTMGPALER) the chain is Extracellular. Residues 389–405 (IDYLLILWIIGMIWSDI) form a helical membrane-spanning segment. Topologically, residues 406–421 (KRLWYEGLEDFLEESR) are cytoplasmic. The helical transmembrane segment at 422–441 (NQLSFVMNSLYLATFALKVV) threads the bilayer. The Extracellular segment spans residues 442-462 (AHNKFHDFADRKDWDAFHPTL). A helical transmembrane segment spans residues 463 to 483 (VAEGLFAFANVLSYLRLFFMY). The Cytoplasmic portion of the chain corresponds to 484 to 502 (TTSSILGPLQISMGQMLQD). Residues 503-524 (FGKFLGMFLLVLFSFTIGLTQL) traverse the membrane as a helical segment. The Extracellular portion of the chain corresponds to 525 to 589 (YDKGYTSKEQ…GEELQSFVGA (65 aa)). A disulfide bond links Cys537 and Cys542. Residues 590-610 (VIVGTYNVVVVIVLTKLLVAM) form a helical membrane-spanning segment. The Cytoplasmic portion of the chain corresponds to 611–759 (LHKSFQLIAN…SKYAMFYPKN (149 aa)).

The protein belongs to the transient receptor (TC 1.A.4) family. STrpC subfamily. TRPC1 sub-subfamily. As to quaternary structure, heterotetramer with TRPC4 and/or TRPC5. Forms a heteromeric ion channel with TRPC4, with a 1:3 TRPC1:TRPC4 stoichiometry. Unlike other TRP channel proteins, does not form a homomeric channel. Interacts with TRPC4AP. Interacts with ITPR3. Interacts with MX1 and RNF24. Interacts with FKBP4. Interacts with PLSCR1. Interacts with PKD2L2. Forms a heterotetramer with PKD2 with a 2:2 stoichiometry; has distinct channel properties separate from PKD2 or TRPC1 homomers alone. Activation of PRKCA induces phosphorylation of TRPC1 and subsequent Ca2+ entry into cells. As to expression, expressed in brain, hippocampus, amygdala, Purkinje cells and single neurons in the cortex and striatum.

Its subcellular location is the cell membrane. The catalysed reaction is Ca(2+)(in) = Ca(2+)(out). The enzyme catalyses Na(+)(in) = Na(+)(out). It carries out the reaction Li(+)(in) = Li(+)(out). It catalyses the reaction Cs(+)(in) = Cs(+)(out). May be operated by a phosphatidylinositol second messenger system activated by receptor tyrosine kinases or G-protein coupled receptors. Also activated by intracellular calcium store depletion. Forms a receptor-activated non-selective calcium permeant cation channel. Forms a heteromeric ion channel with TRPC4 or TRPC5 that has reduced calcium permeability compared to the homomeric TRPC4 or TRPC5 channel. Also permeable to monovalent ions including sodium, lithium and cesium ions. The chain is Short transient receptor potential channel 1 (Trpc1) from Rattus norvegicus (Rat).